The chain runs to 460 residues: Amino acid transporter AVT6A (460 aa).

The next 11 membrane-spanning stretches (helical) occupy residues 45–65 (FSGAVFNLATTIIGAGIMALP), 66–86 (ATMKILGLGLGITMIVVMAFL), 120–140 (ILLQVAVLVNNIGVLIVYMII), 172–192 (AAILLITTLGVFAPLACFKRI), 199–219 (SALSVALAVVFLIITAGISIM), 238–258 (LTSFWNLFTVVPVLVTAFICH), 281–301 (ALMLCSSVYIMTSIFGFLLFG), 336–356 (LMLVFPIVFYPLRINIDGLLF), 371–391 (CLTAGLISVIFLGANFIPSIW), 394–414 (FQFTGATAAVCLGFIFPASII), and 427–447 (TTLAIFMIVLAVLSNAIAIYS).

This sequence belongs to the amino acid/polyamine transporter 2 family. Amino acid/auxin permease (AAAP) (TC 2.A.18.6) subfamily.

The protein localises to the membrane. This is Amino acid transporter AVT6A from Arabidopsis thaliana (Mouse-ear cress).